The chain runs to 116 residues: Calcium-regulated OB-fold protein CarO (116 aa).

An N-terminal signal peptide occupies residues 1–21; sequence MKLRHLPLIAAIGLFSTVTLA.

It localises to the periplasm. Its function is as follows. Plays a role in intracellular Ca(2+) homeostasis. Involved in cell protection against oxidative stress in strain 25W. This Pseudomonas aeruginosa (strain ATCC 15692 / DSM 22644 / CIP 104116 / JCM 14847 / LMG 12228 / 1C / PRS 101 / PAO1) protein is Calcium-regulated OB-fold protein CarO.